A 521-amino-acid chain; its full sequence is DEAD-box ATP-dependent RNA helicase 1 (521 aa).

Residues 1–20 are disordered; it reads MVVAMATKEEEGGPSSRVPH. Positions 36–65 match the Q motif motif; it reads CPVAHLPRLDPRLVKPLQRMGIESFFPVQV. One can recognise a Helicase ATP-binding domain in the interval 72–302; sequence IGPGAFERDI…QLELQHPLLL (231 aa). 85-92 is an ATP binding site; that stretch reads SPTGSGKT. Positions 213–216 match the DEAD box motif; that stretch reads DETD. In terms of domain architecture, Helicase C-terminal spans 330 to 480; it reads SLIVLLQELR…SLPEESVETL (151 aa). Positions 495-507 are enriched in basic and acidic residues; it reads LESEATKKSKSGD. Positions 495-521 are disordered; sequence LESEATKKSKSGDKAPNASKRKRTINT.

Belongs to the DEAD box helicase family. DDX51/DBP6 subfamily.

The enzyme catalyses ATP + H2O = ADP + phosphate + H(+). This Oryza sativa subsp. japonica (Rice) protein is DEAD-box ATP-dependent RNA helicase 1.